Here is a 561-residue protein sequence, read N- to C-terminus: MRLWKSMAWGILLWHSQSGALCPAWPPARAAEEIARLQQQLADWNDIYWKQGVSAVDDSVYDQLSARLVQWQRCVGQDVSSTPVSPPLNGTTMHPVAHTGVRKLADRQAVEQWMRGRSELWVQPKVDGVAVTLLYQNGKLARAISRGNGLQGEDWTPKIRLIPSIPQSTQGALANAVLQGEIFLQREGHIQQRMGGMNARSKVAGMLMRQDNASALNSLGIFIWAWPDGPANMPERLSQLAKAGFSLTKKYSLVVKDASEVERARQSWLTSALPFVTDGVVIRMAKEPASQYWRPGQGDWLAAWKYPPVAQVAQVSAIQFSVGKSGKITVVASLVPVILDDKRVQRVNIGSVKRWEAWDIAPGDQILVSLAGQGIPRLDEVVWRSRERSKPVPPDSHFNSLTCFYASETCQEQFISRLVWLGSRSALGLDGMGEASWRALHQTHRFEHIFSWLALTSAQIANTPGFAKGKSEQIWRQFNLARRQPFTRWIMAMDIPLTQAALQASGDRSWEQLLMRTEQHWRQLPATGERRAGRVIDWRDNPQIKTLSRWLAAQHIPGFGS.

Lys125 serves as the catalytic N6-AMP-lysine intermediate.

The protein belongs to the NAD-dependent DNA ligase family. LigB subfamily.

It catalyses the reaction NAD(+) + (deoxyribonucleotide)n-3'-hydroxyl + 5'-phospho-(deoxyribonucleotide)m = (deoxyribonucleotide)n+m + AMP + beta-nicotinamide D-nucleotide.. In terms of biological role, catalyzes the formation of phosphodiester linkages between 5'-phosphoryl and 3'-hydroxyl groups in double-stranded DNA using NAD as a coenzyme and as the energy source for the reaction. The polypeptide is DNA ligase B (Salmonella heidelberg (strain SL476)).